Consider the following 126-residue polypeptide: Large ribosomal subunit protein uL14m (126 aa).

Belongs to the universal ribosomal protein uL14 family. Component of the mitochondrial large ribosomal subunit (mt-LSU). Mature yeast 74S mitochondrial ribosomes consist of a small (37S) and a large (54S) subunit. The 37S small subunit contains a 15S ribosomal RNA (15S mt-rRNA) and at least 32 different proteins. The 54S large subunit contains a 21S rRNA (21S mt-rRNA) and at least 45 different proteins.

The protein localises to the mitochondrion. In terms of biological role, component of the mitochondrial ribosome (mitoribosome), a dedicated translation machinery responsible for the synthesis of mitochondrial genome-encoded proteins, including at least some of the essential transmembrane subunits of the mitochondrial respiratory chain. The mitoribosomes are attached to the mitochondrial inner membrane and translation products are cotranslationally integrated into the membrane. The chain is Large ribosomal subunit protein uL14m (mrpl38) from Schizosaccharomyces pombe (strain 972 / ATCC 24843) (Fission yeast).